Reading from the N-terminus, the 335-residue chain is MIKVGVVGASGYTGLELVKMLITHPGFELTYLATTQGDTTIEALHPSLEGVVTLEVEKADVNAVADACELVFLALPHKASMGFAKGLIEKGVKVVDLSADYRLELDTYEAHYCEHEDKEHLDESVYALIEYYREELKEAELAAGPGCYPTATLLGILPFIPYIDTSAPLFVDAKSGVSGAGKKLSETTHFVTVNDNIFAYNPLKHRHAPEIAEKIEKVHGAKMNVNFVPHLIPATRGELVSVYATLKEDIDPLEVLRKHYANDRFIRIREKPVDIKSTAGTHFCDIYAAKNGHALFVSSAIDNLLRGASSQALAAANLMCGYDEGMGLPVIPYMP.

C147 is an active-site residue.

The protein belongs to the NAGSA dehydrogenase family. Type 1 subfamily.

The protein localises to the cytoplasm. The catalysed reaction is N-acetyl-L-glutamate 5-semialdehyde + phosphate + NADP(+) = N-acetyl-L-glutamyl 5-phosphate + NADPH + H(+). It functions in the pathway amino-acid biosynthesis; L-arginine biosynthesis; N(2)-acetyl-L-ornithine from L-glutamate: step 3/4. In terms of biological role, catalyzes the NADPH-dependent reduction of N-acetyl-5-glutamyl phosphate to yield N-acetyl-L-glutamate 5-semialdehyde. In Sulfurovum sp. (strain NBC37-1), this protein is N-acetyl-gamma-glutamyl-phosphate reductase.